Here is a 256-residue protein sequence, read N- to C-terminus: UPF0246 protein PG_1544 (256 aa).

This sequence belongs to the UPF0246 family.

The chain is UPF0246 protein PG_1544 from Porphyromonas gingivalis (strain ATCC BAA-308 / W83).